We begin with the raw amino-acid sequence, 374 residues long: 4-hydroxybenzoate polyprenyltransferase, mitochondrial (374 aa).

A mitochondrion-targeting transit peptide spans 1 to 63; that stretch reads MLRLGGAGLV…RALSLSAAAV (63 aa). Over 64–83 the chain is Mitochondrial matrix; the sequence is VNSAPRPLQPYLRLMRLDKP. Residues 84–104 form a helical membrane-spanning segment; that stretch reads IGTWLLYLPCTWSIGLAADPG. The Mitochondrial intermembrane segment spans residues 105-108; that stretch reads CFPD. Residues 109–129 form a helical membrane-spanning segment; the sequence is WYMLSLFGTGAILMRGAGCTI. At 130 to 153 the chain is on the mitochondrial matrix side; that stretch reads NDMWDRDFDKKVERTANRPIAAGD. Residues 154–174 traverse the membrane as a helical segment; that stretch reads ISAFQSFVFLGAQLTLALGVL. Over 175 to 176 the chain is Mitochondrial intermembrane; sequence LH. The chain crosses the membrane as a helical span at residues 177-197; it reads LNYYSIAMGAASLLLVVTYPL. Residues 198 to 200 are Mitochondrial matrix-facing; sequence MKR. A helical membrane pass occupies residues 201 to 221; the sequence is VTFWPQLALGLTFNWGALLGW. The Mitochondrial intermembrane segment spans residues 222–230; sequence SAVKGSCDP. The helical transmembrane segment at 231–251 threads the bilayer; that stretch reads AVCLPLYFSGVMWTLIYDTIY. Residues 252 to 277 are Mitochondrial matrix-facing; that stretch reads AHQDKKDDALIGLKSTALLFRENTKQ. The helical transmembrane segment at 278-298 threads the bilayer; it reads WLSGFGVAMVGALSLVGASSG. At 299–300 the chain is on the mitochondrial intermembrane side; that stretch reads QT. The helical transmembrane segment at 301-321 threads the bilayer; it reads LPYYAAVAAVGAHLAHQIYTV. Topologically, residues 322 to 332 are mitochondrial matrix; that stretch reads DIHRAEDCWEK. Residues 333-353 traverse the membrane as a helical segment; that stretch reads FTSNRTVGLLLFLGIVLGNLY. The Mitochondrial intermembrane portion of the chain corresponds to 354–374; it reads KDKPDETKGVDAVGEESERTS.

The protein belongs to the UbiA prenyltransferase family. Requires Mg(2+) as cofactor.

It localises to the mitochondrion inner membrane. The catalysed reaction is an all-trans-polyprenyl diphosphate + 4-hydroxybenzoate = a 4-hydroxy-3-(all-trans-polyprenyl)benzoate + diphosphate. It carries out the reaction all-trans-decaprenyl diphosphate + 4-hydroxybenzoate = 4-hydroxy-3-(all-trans-decaprenyl)benzoate + diphosphate. It catalyses the reaction all-trans-nonaprenyl diphosphate + 4-hydroxybenzoate = 4-hydroxy-3-(all-trans-nonaprenyl)benzoate + diphosphate. It functions in the pathway cofactor biosynthesis; ubiquinone biosynthesis. In terms of biological role, mediates the second step in the final reaction sequence of coenzyme Q (CoQ) biosynthesis. Catalyzes the prenylation of para-hydroxybenzoate (PHB) with an all-trans polyprenyl group (such as all-trans-nonaprenyl diphosphate). The length of the polyprenyl side chain varies depending on the species, in humans, the side chain is comprised of 10 isoprenyls producing CoQ10 (also known as ubiquinone), whereas rodents predominantly generate CoQ9. However, this specificity is not complete, human tissues have low amounts of CoQ9 and rodent organs contain some CoQ10. Plays a central role in the biosynthesis of CoQ9. CoQ9 is a vital molecule that transports electrons from mitochondrial respiratory chain complexes. CoQs also function as cofactors for uncoupling protein and plays a role as regulator of the extracellularly-induced ceramide-dependent apoptotic pathway. Regulates mitochondrial permeability transition pore (mPTP) opening and ROS production (pivotal events in cell death) in a tissue specific manner. The sequence is that of 4-hydroxybenzoate polyprenyltransferase, mitochondrial from Rattus norvegicus (Rat).